Consider the following 396-residue polypeptide: Elongation factor Tu 1 (396 aa).

A tr-type G domain is found at 10–206 (KPHVNVGTIG…ALDTYIPTPE (197 aa)). Residues 19-26 (GHVDHGKT) are G1. 19-26 (GHVDHGKT) lines the GTP pocket. Residue threonine 26 participates in Mg(2+) binding. The tract at residues 60–64 (GITIN) is G2. A G3 region spans residues 81–84 (DCPG). GTP-binding positions include 81–85 (DCPGH) and 136–139 (NKAD). The G4 stretch occupies residues 136-139 (NKAD). The G5 stretch occupies residues 174–176 (SAK).

Belongs to the TRAFAC class translation factor GTPase superfamily. Classic translation factor GTPase family. EF-Tu/EF-1A subfamily. As to quaternary structure, monomer.

It is found in the cytoplasm. The catalysed reaction is GTP + H2O = GDP + phosphate + H(+). Its function is as follows. GTP hydrolase that promotes the GTP-dependent binding of aminoacyl-tRNA to the A-site of ribosomes during protein biosynthesis. This chain is Elongation factor Tu 1, found in Methylobacillus flagellatus (strain ATCC 51484 / DSM 6875 / VKM B-1610 / KT).